The following is a 135-amino-acid chain: Small ribosomal subunit protein uS11 (135 aa).

The protein belongs to the universal ribosomal protein uS11 family. As to quaternary structure, part of the 30S ribosomal subunit. Interacts with proteins S7 and S18. Binds to IF-3.

In terms of biological role, located on the platform of the 30S subunit, it bridges several disparate RNA helices of the 16S rRNA. Forms part of the Shine-Dalgarno cleft in the 70S ribosome. This Polynucleobacter asymbioticus (strain DSM 18221 / CIP 109841 / QLW-P1DMWA-1) (Polynucleobacter necessarius subsp. asymbioticus) protein is Small ribosomal subunit protein uS11.